A 69-amino-acid polypeptide reads, in one-letter code: Cytochrome c oxidase subunit 8A, mitochondrial (69 aa).

A mitochondrion-targeting transit peptide spans Met-1–Lys-25. Positions Ser-2–Leu-19 match the SIFI-degron motif. The Mitochondrial matrix segment spans residues Ile-26–Gly-36. A helical transmembrane segment spans residues Ile-37 to Ser-60. Over His-61–Glu-69 the chain is Mitochondrial intermembrane.

This sequence belongs to the cytochrome c oxidase VIII family. Component of the cytochrome c oxidase (complex IV, CIV), a multisubunit enzyme composed of 14 subunits. The complex is composed of a catalytic core of 3 subunits MT-CO1, MT-CO2 and MT-CO3, encoded in the mitochondrial DNA, and 11 supernumerary subunits COX4I, COX5A, COX5B, COX6A, COX6B, COX6C, COX7A, COX7B, COX7C, COX8 and NDUFA4, which are encoded in the nuclear genome. The complex exists as a monomer or a dimer and forms supercomplexes (SCs) in the inner mitochondrial membrane with NADH-ubiquinone oxidoreductase (complex I, CI) and ubiquinol-cytochrome c oxidoreductase (cytochrome b-c1 complex, complex III, CIII), resulting in different assemblies (supercomplex SCI(1)III(2)IV(1) and megacomplex MCI(2)III(2)IV(2)). Post-translationally, in response to mitochondrial stress, the precursor protein is ubiquitinated by the SIFI complex in the cytoplasm before mitochondrial import, leading to its degradation. Within the SIFI complex, UBR4 initiates ubiquitin chain that are further elongated or branched by KCMF1.

Its subcellular location is the mitochondrion inner membrane. It functions in the pathway energy metabolism; oxidative phosphorylation. Its function is as follows. Component of the cytochrome c oxidase, the last enzyme in the mitochondrial electron transport chain which drives oxidative phosphorylation. The respiratory chain contains 3 multisubunit complexes succinate dehydrogenase (complex II, CII), ubiquinol-cytochrome c oxidoreductase (cytochrome b-c1 complex, complex III, CIII) and cytochrome c oxidase (complex IV, CIV), that cooperate to transfer electrons derived from NADH and succinate to molecular oxygen, creating an electrochemical gradient over the inner membrane that drives transmembrane transport and the ATP synthase. Cytochrome c oxidase is the component of the respiratory chain that catalyzes the reduction of oxygen to water. Electrons originating from reduced cytochrome c in the intermembrane space (IMS) are transferred via the dinuclear copper A center (CU(A)) of subunit 2 and heme A of subunit 1 to the active site in subunit 1, a binuclear center (BNC) formed by heme A3 and copper B (CU(B)). The BNC reduces molecular oxygen to 2 water molecules using 4 electrons from cytochrome c in the IMS and 4 protons from the mitochondrial matrix. This is Cytochrome c oxidase subunit 8A, mitochondrial (COX8A) from Hylobates agilis (Agile gibbon).